Consider the following 194-residue polypeptide: Prefoldin subunit 3 (194 aa).

The protein belongs to the prefoldin subunit alpha family. In terms of assembly, heterohexamer of two PFD-alpha type and four PFD-beta type subunits. Interacts with itself. Interacts with Vhl and betaTub56D/tubulin beta-1 chain. Interacts with tubulin alpha-beta heterodimers by itself or in complex with Vhl. Does not interact with microtubules (MTs). Expressed in larval central nervous system (CNS) and pupal testis (at protein level).

The protein localises to the cytoplasm. Functionally, binds specifically to cytosolic chaperonin (c-CPN) and transfers target proteins to it. Binds to nascent polypeptide chain and promotes folding in an environment in which there are many competing pathways for nonnative proteins. Required for tubulin stability and spindle and centrosome formation in cooperation with Vhl. This chain is Prefoldin subunit 3 (mgr), found in Drosophila melanogaster (Fruit fly).